The chain runs to 153 residues: 3-hydroxyacyl-[acyl-carrier-protein] dehydratase FabZ (153 aa).

H54 is a catalytic residue.

Belongs to the thioester dehydratase family. FabZ subfamily.

Its subcellular location is the cytoplasm. It catalyses the reaction a (3R)-hydroxyacyl-[ACP] = a (2E)-enoyl-[ACP] + H2O. In terms of biological role, involved in unsaturated fatty acids biosynthesis. Catalyzes the dehydration of short chain beta-hydroxyacyl-ACPs and long chain saturated and unsaturated beta-hydroxyacyl-ACPs. This is 3-hydroxyacyl-[acyl-carrier-protein] dehydratase FabZ from Chlamydia pneumoniae (Chlamydophila pneumoniae).